We begin with the raw amino-acid sequence, 212 residues long: Ribonuclease HII (212 aa).

An RNase H type-2 domain is found at 24 to 212 (QLVAGVDEVG…PVKKALGIEE (189 aa)). A divalent metal cation-binding residues include Asp30, Glu31, and Asp122.

It belongs to the RNase HII family. Requires Mn(2+) as cofactor. Mg(2+) serves as cofactor.

Its subcellular location is the cytoplasm. The catalysed reaction is Endonucleolytic cleavage to 5'-phosphomonoester.. In terms of biological role, endonuclease that specifically degrades the RNA of RNA-DNA hybrids. In Vibrio campbellii (strain ATCC BAA-1116), this protein is Ribonuclease HII.